We begin with the raw amino-acid sequence, 311 residues long: Apolipoprotein E (311 aa).

The first 18 residues, methionine 1 to alanine 18, serve as a signal peptide directing secretion. Tandem repeats lie at residues alanine 72 to glycine 93, proline 94 to glycine 115, alanine 116 to glycine 137, glutamine 138 to methionine 159, arginine 160 to glutamate 181, arginine 182 to alanine 203, asparagine 204 to arginine 225, and glycine 226 to glutamate 247. The segment at alanine 72–glutamate 247 is 8 X 22 AA approximate tandem repeats. Position 135 is a methionine sulfoxide (methionine 135). Position 139 is a phosphoserine (serine 139). The LDL and other lipoprotein receptors binding stretch occupies residues histidine 150–arginine 160. Heparin is bound at residue methionine 154–arginine 157. Residues threonine 202 to methionine 282 are lipid-binding and lipoprotein association. Position 221 to 228 (glycine 221 to leucine 228) interacts with heparin. Residues glutamine 258–glutamine 311 form a homooligomerization region. Residues arginine 270 to methionine 282 are specificity for association with VLDL.

Belongs to the apolipoprotein A1/A4/E family. As to quaternary structure, homotetramer. May interact with ABCA1; functionally associated with ABCA1 in the biogenesis of HDLs. May interact with APP/A4 amyloid-beta peptide; the interaction is extremely stable in vitro but its physiological significance is unclear. May interact with MAPT. May interact with MAP2. In the cerebrospinal fluid, interacts with secreted SORL1. Interacts with PMEL; this allows the loading of PMEL luminal fragment on ILVs to induce fibril nucleation. In terms of processing, APOE exists as multiple glycosylated and sialylated glycoforms within cells and in plasma. The extent of glycosylation and sialylation are tissue and context specific. Glycated in plasma VLDL. Post-translationally, phosphorylated by FAM20C in the extracellular medium.

It localises to the secreted. The protein localises to the extracellular space. The protein resides in the extracellular matrix. Its subcellular location is the extracellular vesicle. It is found in the endosome. It localises to the multivesicular body. APOE is an apolipoprotein, a protein associating with lipid particles, that mainly functions in lipoprotein-mediated lipid transport between organs via the plasma and interstitial fluids. APOE is a core component of plasma lipoproteins and is involved in their production, conversion and clearance. Apolipoproteins are amphipathic molecules that interact both with lipids of the lipoprotein particle core and the aqueous environment of the plasma. As such, APOE associates with chylomicrons, chylomicron remnants, very low density lipoproteins (VLDL) and intermediate density lipoproteins (IDL) but shows a preferential binding to high-density lipoproteins (HDL). It also binds a wide range of cellular receptors including the LDL receptor/LDLR and the very low-density lipoprotein receptor/VLDLR that mediate the cellular uptake of the APOE-containing lipoprotein particles. Finally, APOE also has a heparin-binding activity and binds heparan-sulfate proteoglycans on the surface of cells, a property that supports the capture and the receptor-mediated uptake of APOE-containing lipoproteins by cells. This chain is Apolipoprotein E (Apoe), found in Mus musculus (Mouse).